Reading from the N-terminus, the 133-residue chain is Holo-[acyl-carrier-protein] synthase (133 aa).

The Mg(2+) site is built by D8 and E57.

It belongs to the P-Pant transferase superfamily. AcpS family. Mg(2+) serves as cofactor.

Its subcellular location is the cytoplasm. The catalysed reaction is apo-[ACP] + CoA = holo-[ACP] + adenosine 3',5'-bisphosphate + H(+). In terms of biological role, transfers the 4'-phosphopantetheine moiety from coenzyme A to a Ser of acyl-carrier-protein. The protein is Holo-[acyl-carrier-protein] synthase of Bartonella quintana (strain Toulouse) (Rochalimaea quintana).